The primary structure comprises 1036 residues: Lethal(2) giant larvae protein homolog 1 (1036 aa).

WD repeat units lie at residues 38 to 71 (SALA…FTGL), 78 to 119 (VTQM…GLSF), 139 to 175 (VTVV…GQTL), 199 to 233 (SLQG…EHVF), 239 to 271 (LESL…GSPP), 289 to 331 (AINK…ETLV), 339 to 373 (VIDF…VLDL), 395 to 473 (TCSA…YKLS), 517 to 592 (QKVA…RMLI), and 601 to 662 (TAVT…LRQS). Ser-662 is subject to Phosphoserine. The span at 667–677 (RKSRVSGKKRT) shows a compositional bias: basic residues. Positions 667–688 (RKSRVSGKKRTPAASSKLQEAN) are disordered. The segment covering 679-688 (AASSKLQEAN) has biased composition (polar residues). WD repeat units follow at residues 722 to 782 (VRCL…KEVQ), 791 to 843 (AIAV…VSAK), 848 to 901 (LTAH…VHYS), and 915 to 938 (VFTR…SLSA). Position 957 is a phosphothreonine (Thr-957). A phosphoserine mark is found at Ser-964, Ser-982, and Ser-989. Positions 980 to 1002 (PESCEGSPSSAHSKRADTMEPPE) are disordered.

This sequence belongs to the WD repeat L(2)GL family. Associated with nonmuscle myosin II heavy chain. Interacts with PRKCI/aPKC, PARD6B/Par-6 and PARD6A. Interacts with STX4A. Interacts with RAB10 (GDP-bound form); the interaction is direct and promotes RAB10 association with membranes and activation through competition with the Rab inhibitor GDI1. Interacts with DCAF1. In terms of processing, phosphorylated by PRKCI. As to expression, widely expressed. Expressed in brain, ovary, testis, with moderate expression in lever, uterus, lung and kidney.

It localises to the early endosome membrane. Its subcellular location is the golgi apparatus. The protein localises to the trans-Golgi network membrane. The protein resides in the cell projection. It is found in the axon. It localises to the golgi apparatus membrane. Its subcellular location is the cytoplasm. The protein localises to the cytoskeleton. In terms of biological role, cortical cytoskeleton protein found in a complex involved in maintaining cell polarity and epithelial integrity. Involved in the regulation of mitotic spindle orientation, proliferation, differentiation and tissue organization of neuroepithelial cells. Involved in axonogenesis through RAB10 activation thereby regulating vesicular membrane trafficking toward the axonal plasma membrane. In Bos taurus (Bovine), this protein is Lethal(2) giant larvae protein homolog 1 (LLGL1).